The following is a 181-amino-acid chain: Urease accessory protein UreE (181 aa).

The segment at 143–181 (FDPEPGAYNQAGQGHSHGHSHGHSHNHDHEHSHGHKHAH) is disordered.

Belongs to the UreE family.

The protein localises to the cytoplasm. Its function is as follows. Involved in urease metallocenter assembly. Binds nickel. Probably functions as a nickel donor during metallocenter assembly. The protein is Urease accessory protein UreE of Marinobacter nauticus (strain ATCC 700491 / DSM 11845 / VT8) (Marinobacter aquaeolei).